The chain runs to 458 residues: ATP synthase subunit beta (458 aa).

148 to 155 lines the ATP pocket; it reads GGAGVGKT.

The protein belongs to the ATPase alpha/beta chains family. F-type ATPases have 2 components, CF(1) - the catalytic core - and CF(0) - the membrane proton channel. CF(1) has five subunits: alpha(3), beta(3), gamma(1), delta(1), epsilon(1). CF(0) has three main subunits: a(1), b(2) and c(9-12). The alpha and beta chains form an alternating ring which encloses part of the gamma chain. CF(1) is attached to CF(0) by a central stalk formed by the gamma and epsilon chains, while a peripheral stalk is formed by the delta and b chains.

It is found in the cell inner membrane. The enzyme catalyses ATP + H2O + 4 H(+)(in) = ADP + phosphate + 5 H(+)(out). In terms of biological role, produces ATP from ADP in the presence of a proton gradient across the membrane. The catalytic sites are hosted primarily by the beta subunits. This is ATP synthase subunit beta from Pseudomonas aeruginosa (strain LESB58).